A 316-amino-acid polypeptide reads, in one-letter code: tRNA dimethylallyltransferase (316 aa).

17–24 lines the ATP pocket; the sequence is GPTASGKT. 19–24 contacts substrate; it reads TASGKT. Interaction with substrate tRNA regions lie at residues 42 to 45, 166 to 170, 247 to 252, and 280 to 287; these read DSAL, QRLSR, RCVGYR, and KRQITWLR.

This sequence belongs to the IPP transferase family. As to quaternary structure, monomer. Mg(2+) serves as cofactor.

The catalysed reaction is adenosine(37) in tRNA + dimethylallyl diphosphate = N(6)-dimethylallyladenosine(37) in tRNA + diphosphate. Its function is as follows. Catalyzes the transfer of a dimethylallyl group onto the adenine at position 37 in tRNAs that read codons beginning with uridine, leading to the formation of N6-(dimethylallyl)adenosine (i(6)A). This is tRNA dimethylallyltransferase from Escherichia coli O81 (strain ED1a).